Here is a 299-residue protein sequence, read N- to C-terminus: uncharacterized protein (299 aa).

The tract at residues 1 to 44 (MSDSNLTNPIKAFFHDEFPEQYQEPPGLQKNMKPVPDCGEKSYK) is disordered. Residue 55-79 (LVTGGDSGIGRAAAIAYAREGADVA) coordinates NADP(+). A substrate-binding site is contributed by S188. The Proton acceptor role is filled by Y201.

This sequence belongs to the short-chain dehydrogenases/reductases (SDR) family.

This is an uncharacterized protein from Bacillus subtilis (strain 168).